An 82-amino-acid chain; its full sequence is Small ribosomal subunit protein bS18 (82 aa).

Belongs to the bacterial ribosomal protein bS18 family. In terms of assembly, part of the 30S ribosomal subunit. Forms a tight heterodimer with protein bS6.

Binds as a heterodimer with protein bS6 to the central domain of the 16S rRNA, where it helps stabilize the platform of the 30S subunit. The polypeptide is Small ribosomal subunit protein bS18 (Chlamydia caviae (strain ATCC VR-813 / DSM 19441 / 03DC25 / GPIC) (Chlamydophila caviae)).